The following is a 219-amino-acid chain: Adenylate kinase (219 aa).

Residue 10-15 (GAGKGT) coordinates ATP. The NMP stretch occupies residues 30 to 59 (ATGDLFRANISQGTDLGKQARAYMDAGQLV). AMP is bound by residues threonine 31, arginine 36, 57–59 (QLV), 85–88 (GFPR), and glutamine 92. Residues 126 to 164 (GRRVCRNNSAHVFHLTYNPPKAEGVCDACGGELYQRDDD) are LID. ATP is bound by residues arginine 127 and 137–138 (VF). AMP contacts are provided by arginine 161 and arginine 172. Residue glycine 200 participates in ATP binding.

The protein belongs to the adenylate kinase family. As to quaternary structure, monomer.

It localises to the cytoplasm. It catalyses the reaction AMP + ATP = 2 ADP. The protein operates within purine metabolism; AMP biosynthesis via salvage pathway; AMP from ADP: step 1/1. Catalyzes the reversible transfer of the terminal phosphate group between ATP and AMP. Plays an important role in cellular energy homeostasis and in adenine nucleotide metabolism. This Streptomyces griseus subsp. griseus (strain JCM 4626 / CBS 651.72 / NBRC 13350 / KCC S-0626 / ISP 5235) protein is Adenylate kinase.